The following is a 342-amino-acid chain: UDP-N-acetylglucosamine--N-acetylmuramyl-(pentapeptide) pyrophosphoryl-undecaprenol N-acetylglucosamine transferase (342 aa).

Residues 10–12 (TGG), asparagine 124, serine 177, and glutamine 275 each bind UDP-N-acetyl-alpha-D-glucosamine.

Belongs to the glycosyltransferase 28 family. MurG subfamily.

Its subcellular location is the cell inner membrane. The catalysed reaction is di-trans,octa-cis-undecaprenyl diphospho-N-acetyl-alpha-D-muramoyl-L-alanyl-D-glutamyl-meso-2,6-diaminopimeloyl-D-alanyl-D-alanine + UDP-N-acetyl-alpha-D-glucosamine = di-trans,octa-cis-undecaprenyl diphospho-[N-acetyl-alpha-D-glucosaminyl-(1-&gt;4)]-N-acetyl-alpha-D-muramoyl-L-alanyl-D-glutamyl-meso-2,6-diaminopimeloyl-D-alanyl-D-alanine + UDP + H(+). The protein operates within cell wall biogenesis; peptidoglycan biosynthesis. In terms of biological role, cell wall formation. Catalyzes the transfer of a GlcNAc subunit on undecaprenyl-pyrophosphoryl-MurNAc-pentapeptide (lipid intermediate I) to form undecaprenyl-pyrophosphoryl-MurNAc-(pentapeptide)GlcNAc (lipid intermediate II). This Campylobacter jejuni subsp. jejuni serotype O:2 (strain ATCC 700819 / NCTC 11168) protein is UDP-N-acetylglucosamine--N-acetylmuramyl-(pentapeptide) pyrophosphoryl-undecaprenol N-acetylglucosamine transferase.